Reading from the N-terminus, the 860-residue chain is Leucine--tRNA ligase (860 aa).

The short motif at 42–52 (PYPSGRLHMGH) is the 'HIGH' region element. The 'KMSKS' region motif lies at 619–623 (KMSKS). ATP is bound at residue Lys-622.

The protein belongs to the class-I aminoacyl-tRNA synthetase family.

It is found in the cytoplasm. The enzyme catalyses tRNA(Leu) + L-leucine + ATP = L-leucyl-tRNA(Leu) + AMP + diphosphate. In Actinobacillus succinogenes (strain ATCC 55618 / DSM 22257 / CCUG 43843 / 130Z), this protein is Leucine--tRNA ligase.